The sequence spans 73 residues: Putative membrane protein insertion efficiency factor (73 aa).

Belongs to the UPF0161 family.

It is found in the cell inner membrane. Could be involved in insertion of integral membrane proteins into the membrane. The chain is Putative membrane protein insertion efficiency factor from Treponema denticola (strain ATCC 35405 / DSM 14222 / CIP 103919 / JCM 8153 / KCTC 15104).